We begin with the raw amino-acid sequence, 700 residues long: ATP-dependent zinc metalloprotease FtsH (700 aa).

Residues 1–20 are Cytoplasmic-facing; that stretch reads MSSDNGSGRQGGDRGGSTGY. The chain crosses the membrane as a helical span at residues 21 to 41; the sequence is NLLMYLGFGAIIATLVALYVL. Topologically, residues 42-171 are periplasmic; sequence QMFQTSLDYT…FRHADPPGPW (130 aa). Residues 172–192 form a helical membrane-spanning segment; the sequence is EQHSQLIIGMLLAAMLIYIVV. At 193–700 the chain is on the cytoplasmic side; it reads RRLSAAGSPM…ITAPATERSG (508 aa). ATP is bound at residue 262–269; the sequence is GPPGTGKT. His484 contacts Zn(2+). The active site involves Glu485. The Zn(2+) site is built by His488 and Asp561.

It in the central section; belongs to the AAA ATPase family. In the C-terminal section; belongs to the peptidase M41 family. Homohexamer. The cofactor is Zn(2+).

It is found in the cell inner membrane. In terms of biological role, acts as a processive, ATP-dependent zinc metallopeptidase for both cytoplasmic and membrane proteins. Plays a role in the quality control of integral membrane proteins. This Pirellula staleyi (strain ATCC 27377 / DSM 6068 / ICPB 4128) (Pirella staleyi) protein is ATP-dependent zinc metalloprotease FtsH.